The primary structure comprises 320 residues: Malate dehydrogenase (320 aa).

NAD(+) is bound by residues 10 to 15 (GAGMIG) and D34. 2 residues coordinate substrate: R83 and R89. NAD(+)-binding positions include N96 and 119 to 121 (ITN). Substrate-binding residues include N121 and R152. H176 (proton acceptor) is an active-site residue.

Belongs to the LDH/MDH superfamily. MDH type 3 family.

It catalyses the reaction (S)-malate + NAD(+) = oxaloacetate + NADH + H(+). In terms of biological role, catalyzes the reversible oxidation of malate to oxaloacetate. The polypeptide is Malate dehydrogenase (Caulobacter vibrioides (strain NA1000 / CB15N) (Caulobacter crescentus)).